A 326-amino-acid polypeptide reads, in one-letter code: DNA-directed RNA polymerase subunit alpha (326 aa).

An alpha N-terminal domain (alpha-NTD) region spans residues 1 to 231 (MQTALLKPKI…DQLSVFAALE (231 aa)). Positions 247–326 (IDPILLRPVD…ENWPPAGLEK (80 aa)) are alpha C-terminal domain (alpha-CTD).

This sequence belongs to the RNA polymerase alpha chain family. In terms of assembly, homodimer. The RNAP catalytic core consists of 2 alpha, 1 beta, 1 beta' and 1 omega subunit. When a sigma factor is associated with the core the holoenzyme is formed, which can initiate transcription.

The catalysed reaction is RNA(n) + a ribonucleoside 5'-triphosphate = RNA(n+1) + diphosphate. Functionally, DNA-dependent RNA polymerase catalyzes the transcription of DNA into RNA using the four ribonucleoside triphosphates as substrates. In Cupriavidus metallidurans (strain ATCC 43123 / DSM 2839 / NBRC 102507 / CH34) (Ralstonia metallidurans), this protein is DNA-directed RNA polymerase subunit alpha.